We begin with the raw amino-acid sequence, 513 residues long: Maturase K (513 aa).

The protein belongs to the intron maturase 2 family. MatK subfamily.

Its subcellular location is the plastid. The protein localises to the chloroplast. Usually encoded in the trnK tRNA gene intron. Probably assists in splicing its own and other chloroplast group II introns. The sequence is that of Maturase K from Sporobolus indicus (Smut grass).